Consider the following 663-residue polypeptide: UvrABC system protein B (663 aa).

The region spanning 31–271 is the Helicase ATP-binding domain; sequence DNIESGEKAQ…EQSISKIQAE (241 aa). An ATP-binding site is contributed by 44-51; the sequence is GATGTGKT. The short motif at 97–120 is the Beta-hairpin element; it reads YYDYYQPEAYVPSSDTYIEKDSSV. The 167-residue stretch at 435-601 folds into the Helicase C-terminal domain; the sequence is QMDDLLGEIN…TIKKDIRDLI (167 aa). Positions 627 to 662 constitute a UVR domain; the sequence is QEAIKQLQKNMQEAAELLDFELAAQLRDLILELKAI.

It belongs to the UvrB family. Forms a heterotetramer with UvrA during the search for lesions. Interacts with UvrC in an incision complex.

Its subcellular location is the cytoplasm. In terms of biological role, the UvrABC repair system catalyzes the recognition and processing of DNA lesions. A damage recognition complex composed of 2 UvrA and 2 UvrB subunits scans DNA for abnormalities. Upon binding of the UvrA(2)B(2) complex to a putative damaged site, the DNA wraps around one UvrB monomer. DNA wrap is dependent on ATP binding by UvrB and probably causes local melting of the DNA helix, facilitating insertion of UvrB beta-hairpin between the DNA strands. Then UvrB probes one DNA strand for the presence of a lesion. If a lesion is found the UvrA subunits dissociate and the UvrB-DNA preincision complex is formed. This complex is subsequently bound by UvrC and the second UvrB is released. If no lesion is found, the DNA wraps around the other UvrB subunit that will check the other stand for damage. This Streptococcus equi subsp. zooepidemicus (strain MGCS10565) protein is UvrABC system protein B.